Consider the following 301-residue polypeptide: Growth-regulating factor 2 (301 aa).

One can recognise a QLQ domain in the interval 11 to 46; it reads LFTATQWQELEHQALIYKYMAAGAPVPPDLLLHLRH. Short sequence motifs (bipartite nuclear localization signal) lie at residues 83–102 and 120–127; these read RRVEDPEPGRCRRTDGKKWR and RGKNRSRK. The region spanning 87–131 is the WRC domain; it reads DPEPGRCRRTDGKKWRCSREAYGESKYCEKHMHRGKNRSRKPVEM.

This sequence belongs to the GRF family.

The protein resides in the nucleus. Its function is as follows. Transcription activator that plays a regulatory role in gibberellin-induced stem elongation. This is Growth-regulating factor 2 (GRF2) from Oryza sativa subsp. japonica (Rice).